The primary structure comprises 493 residues: NAD(P)H-quinone oxidoreductase chain 4, chloroplastic (493 aa).

Transmembrane regions (helical) follow at residues 4-24 (FPWL…IPLL), 34-54 (WYTL…FGYY), 87-107 (MGLI…AWPI), 111-131 (PKLF…LFTS), 134-154 (LFLF…LISL), 167-187 (FIFY…TVCF), 212-232 (ILYL…PFHT), 242-262 (HYST…YGWI), 276-296 (FAPW…SVCL), 313-333 (MGFV…GAIC), 334-354 (QMIS…TTYD), 385-405 (SLAL…LGII), 417-437 (FIIL…LSML), and 462-482 (VFII…PNIL).

It belongs to the complex I subunit 4 family.

The protein localises to the plastid. It is found in the chloroplast thylakoid membrane. The enzyme catalyses a plastoquinone + NADH + (n+1) H(+)(in) = a plastoquinol + NAD(+) + n H(+)(out). The catalysed reaction is a plastoquinone + NADPH + (n+1) H(+)(in) = a plastoquinol + NADP(+) + n H(+)(out). The protein is NAD(P)H-quinone oxidoreductase chain 4, chloroplastic of Chara vulgaris (Common stonewort).